The following is a 172-amino-acid chain: Adenine phosphoribosyltransferase (172 aa).

The protein belongs to the purine/pyrimidine phosphoribosyltransferase family. In terms of assembly, homodimer.

Its subcellular location is the cytoplasm. It carries out the reaction AMP + diphosphate = 5-phospho-alpha-D-ribose 1-diphosphate + adenine. Its pathway is purine metabolism; AMP biosynthesis via salvage pathway; AMP from adenine: step 1/1. Catalyzes a salvage reaction resulting in the formation of AMP, that is energically less costly than de novo synthesis. This chain is Adenine phosphoribosyltransferase, found in Exiguobacterium sibiricum (strain DSM 17290 / CCUG 55495 / CIP 109462 / JCM 13490 / 255-15).